The chain runs to 390 residues: F-box/kelch-repeat protein At3g06570 (390 aa).

Residues 23–69 (SASFQSLPDDLILSIVARVPRLYHRTVSLVCKSFRSLLVSPELYKAR) enclose the F-box domain. 3 Kelch repeats span residues 140 to 183 (DIYN…VLDR), 185 to 234 (IFVV…CRTA), and 236 to 281 (IDGK…QIHN).

This chain is F-box/kelch-repeat protein At3g06570, found in Arabidopsis thaliana (Mouse-ear cress).